A 266-amino-acid chain; its full sequence is Thymidylate synthase (266 aa).

Arginine 24 serves as a coordination point for dUMP. Residue histidine 54 participates in (6R)-5,10-methylene-5,6,7,8-tetrahydrofolate binding. Arginine 129–arginine 130 is a dUMP binding site. Cysteine 149 (nucleophile) is an active-site residue. Residues arginine 169–aspartate 172, asparagine 180, and histidine 210–tyrosine 212 each bind dUMP. Residue aspartate 172 coordinates (6R)-5,10-methylene-5,6,7,8-tetrahydrofolate. Position 265 (alanine 265) interacts with (6R)-5,10-methylene-5,6,7,8-tetrahydrofolate.

The protein belongs to the thymidylate synthase family. Bacterial-type ThyA subfamily. In terms of assembly, homodimer.

The protein localises to the cytoplasm. It carries out the reaction dUMP + (6R)-5,10-methylene-5,6,7,8-tetrahydrofolate = 7,8-dihydrofolate + dTMP. The protein operates within pyrimidine metabolism; dTTP biosynthesis. In terms of biological role, catalyzes the reductive methylation of 2'-deoxyuridine-5'-monophosphate (dUMP) to 2'-deoxythymidine-5'-monophosphate (dTMP) while utilizing 5,10-methylenetetrahydrofolate (mTHF) as the methyl donor and reductant in the reaction, yielding dihydrofolate (DHF) as a by-product. This enzymatic reaction provides an intracellular de novo source of dTMP, an essential precursor for DNA biosynthesis. The chain is Thymidylate synthase from Mycolicibacterium paratuberculosis (strain ATCC BAA-968 / K-10) (Mycobacterium paratuberculosis).